We begin with the raw amino-acid sequence, 262 residues long: Phosphonates import ATP-binding protein PhnC (262 aa).

Residues 5–253 enclose the ABC transporter domain; it reads IRVEKLAKTF…RFDHLYRSIN (249 aa). 37-44 contributes to the ATP binding site; the sequence is GPSGSGKS.

It belongs to the ABC transporter superfamily. Phosphonates importer (TC 3.A.1.9.1) family. The complex is composed of two ATP-binding proteins (PhnC), two transmembrane proteins (PhnE) and a solute-binding protein (PhnD).

The protein localises to the cell inner membrane. The enzyme catalyses phosphonate(out) + ATP + H2O = phosphonate(in) + ADP + phosphate + H(+). Its function is as follows. Part of the ABC transporter complex PhnCDE involved in phosphonates import. Responsible for energy coupling to the transport system. This is Phosphonates import ATP-binding protein PhnC from Shigella sonnei (strain Ss046).